A 484-amino-acid polypeptide reads, in one-letter code: Glutamate--tRNA ligase (484 aa).

The 'HIGH' region motif lies at 11-21 (PSPTGYPHLGN). Positions 108, 110, 135, and 137 each coordinate Zn(2+). A 'KMSKS' region motif is present at residues 245 to 249 (KLSKR). Lysine 248 serves as a coordination point for ATP.

Belongs to the class-I aminoacyl-tRNA synthetase family. Glutamate--tRNA ligase type 1 subfamily. Monomer. Zn(2+) is required as a cofactor.

It is found in the cytoplasm. The enzyme catalyses tRNA(Glu) + L-glutamate + ATP = L-glutamyl-tRNA(Glu) + AMP + diphosphate. Catalyzes the attachment of glutamate to tRNA(Glu) in a two-step reaction: glutamate is first activated by ATP to form Glu-AMP and then transferred to the acceptor end of tRNA(Glu). The protein is Glutamate--tRNA ligase of Dehalococcoides mccartyi (strain ATCC BAA-2266 / KCTC 15142 / 195) (Dehalococcoides ethenogenes (strain 195)).